Consider the following 184-residue polypeptide: GTP cyclohydrolase 1 (184 aa).

Zn(2+) contacts are provided by C75, H78, and C146.

This sequence belongs to the GTP cyclohydrolase I family. As to quaternary structure, homomer.

It carries out the reaction GTP + H2O = 7,8-dihydroneopterin 3'-triphosphate + formate + H(+). Its pathway is cofactor biosynthesis; 7,8-dihydroneopterin triphosphate biosynthesis; 7,8-dihydroneopterin triphosphate from GTP: step 1/1. This Streptococcus pneumoniae serotype 19F (strain G54) protein is GTP cyclohydrolase 1.